Consider the following 464-residue polypeptide: ATP synthase subunit beta (464 aa).

An ATP-binding site is contributed by 154–161 (GGAGVGKT).

This sequence belongs to the ATPase alpha/beta chains family. As to quaternary structure, F-type ATPases have 2 components, CF(1) - the catalytic core - and CF(0) - the membrane proton channel. CF(1) has five subunits: alpha(3), beta(3), gamma(1), delta(1), epsilon(1). CF(0) has three main subunits: a(1), b(2) and c(9-12). The alpha and beta chains form an alternating ring which encloses part of the gamma chain. CF(1) is attached to CF(0) by a central stalk formed by the gamma and epsilon chains, while a peripheral stalk is formed by the delta and b chains.

It localises to the cell membrane. It catalyses the reaction ATP + H2O + 4 H(+)(in) = ADP + phosphate + 5 H(+)(out). In terms of biological role, produces ATP from ADP in the presence of a proton gradient across the membrane. The catalytic sites are hosted primarily by the beta subunits. The sequence is that of ATP synthase subunit beta from Mycoplasmopsis synoviae (strain 53) (Mycoplasma synoviae).